We begin with the raw amino-acid sequence, 100 residues long: UPF0213 protein YhbQ (100 aa).

The 76-residue stretch at 2 to 77 (TPWFLYLIRT…KQLTKRQKER (76 aa)) folds into the GIY-YIG domain.

It belongs to the UPF0213 family.

The chain is UPF0213 protein YhbQ from Escherichia coli O139:H28 (strain E24377A / ETEC).